The following is an 88-amino-acid chain: Small ribosomal subunit protein uS19 (88 aa).

The protein belongs to the universal ribosomal protein uS19 family.

Functionally, protein S19 forms a complex with S13 that binds strongly to the 16S ribosomal RNA. The chain is Small ribosomal subunit protein uS19 from Mycoplasma mycoides subsp. mycoides SC (strain CCUG 32753 / NCTC 10114 / PG1).